The chain runs to 98 residues: Toxin ParE1 (98 aa).

The protein belongs to the RelE toxin family.

Toxic component of a type II toxin-antitoxin (TA) system. Its toxic effect is neutralized by coexpression with cognate antitoxin ParD1. This Mycobacterium tuberculosis (strain CDC 1551 / Oshkosh) protein is Toxin ParE1 (parE1).